Consider the following 252-residue polypeptide: MTTSRCSHLPEVLPDCTSSAPSGKTVEDCSSLVNGQPQYVMQVSAKDGQLLSTVVRTLTTQSSFNDHPMCRICHEGSTQEDLLSPCECTGTLGTIHRSCLEHWLSSSNTSYCELCHFRFSVERKPRPLVEWLRNPGPQHEKRTLFGDMVCFLFITPLATISGWLCLRGAVDHLHFSSRLEAVGLIALTVALFTIYLFWTLVSFRYHCRLYNEWRRTNQRVILVIPKSANLPSAQQSLLGLHSFKRNSKETIV.

An RING-CH-type zinc finger spans residues 62 to 122; sequence SSFNDHPMCR…ELCHFRFSVE (61 aa). Zn(2+) contacts are provided by Cys70, Cys73, Cys86, Cys88, His96, Cys99, Cys112, and Cys115. A run of 2 helical transmembrane segments spans residues 144-164 and 181-201; these read LFGD…SGWL and AVGL…WTLV.

Its subcellular location is the cytoplasmic vesicle membrane. It localises to the early endosome membrane. It catalyses the reaction S-ubiquitinyl-[E2 ubiquitin-conjugating enzyme]-L-cysteine + [acceptor protein]-L-lysine = [E2 ubiquitin-conjugating enzyme]-L-cysteine + N(6)-ubiquitinyl-[acceptor protein]-L-lysine.. It functions in the pathway protein modification; protein ubiquitination. In terms of biological role, E3 ubiquitin-protein ligase which may be involved in endosomal trafficking. E3 ubiquitin ligases accept ubiquitin from an E2 ubiquitin-conjugating enzyme in the form of a thioester and then directly transfer the ubiquitin to targeted substrates. The chain is E3 ubiquitin-protein ligase MARCHF3 (marchf3) from Xenopus laevis (African clawed frog).